We begin with the raw amino-acid sequence, 1385 residues long: Pesticidal crystal protein Cry5Aa (1385 aa).

Disordered stretches follow at residues 768 to 799 (NITV…GQYN) and 1359 to 1385 (PLPT…NNNQ). Residues 782–796 (NGGGDGGGNGGGDGG) show a composition bias toward gly residues. Residues 1370-1385 (NTASSTNSDTSMNNNQ) show a composition bias toward low complexity.

Belongs to the delta endotoxin family.

Functionally, endotoxin with nematicidal activity. The sequence is that of Pesticidal crystal protein Cry5Aa (cry5Aa) from Bacillus thuringiensis subsp. darmstadiensis.